A 1347-amino-acid chain; its full sequence is Neurofascin (1347 aa).

The signal sequence occupies residues 1-24 (MARQPPPPWVHAAFLLCLLSLGGA). Topologically, residues 25–1217 (IEIPMDPSIQ…NQADIATQGW (1193 aa)) are extracellular. Ig-like C2-type domains are found at residues 41–137 (PTIT…LQVS), 143–230 (PKEN…NPFT), 244–332 (PSFM…ISVR), 337–424 (PYWL…AFVS), 429–517 (PPRM…VRLE), and 521–603 (PTRI…QDLA). Disulfide bonds link C63-C118, C162-C213, C268-C316, and C358-C408. An N-linked (GlcNAc...) asparagine glycan is attached at N305. N-linked (GlcNAc...) asparagine glycosylation is found at N409 and N446. Disulfide bonds link C452–C501 and C543–C592. Y481 carries the phosphotyrosine modification. N-linked (GlcNAc...) asparagine glycosylation is present at N483. A Phosphoserine modification is found at S485. Fibronectin type-III domains follow at residues 630-725 (RPRD…TSGA), 730-823 (NPGD…SGED), 828-930 (APTE…TPEG), and 934-1030 (APRR…PNEA). The interval 713-740 (PSLPSERYRTSGAPPESNPGDVKGEGTR) is disordered. N752 and N778 each carry an N-linked (GlcNAc...) asparagine glycan. Residues 915-934 (GDGPRSETKEFTTPEGVPSA) are disordered. Residues 916 to 926 (DGPRSETKEFT) are compositionally biased toward basic and acidic residues. N-linked (GlcNAc...) asparagine glycans are attached at residues N973 and N988. Disordered stretches follow at residues 1011 to 1040 (TQVG…PTLP) and 1090 to 1111 (TTAA…TKIH). The span at 1024–1040 (PAPPNEATPTAAPPTLP) shows a compositional bias: pro residues. The segment covering 1090–1105 (TTAAATTTTESPPTTT) has biased composition (low complexity). The region spanning 1114-1206 (APDEQSIWNV…ITFMTSTAYT (93 aa)) is the Fibronectin type-III 5 domain. A helical transmembrane segment spans residues 1218–1238 (FIGLMCAIALLVLILLIVCFI). Residues 1239–1347 (KRSRGGKYPV…SPVNAIYSLA (109 aa)) lie on the Cytoplasmic side of the membrane. The interval 1248–1347 (VREKKDVPLG…SPVNAIYSLA (100 aa)) is disordered. Positions 1261–1272 (PKEEDGSFDYSD) are enriched in acidic residues. Residues S1267, S1281, S1294, S1297, S1333, S1334, and S1338 each carry the phosphoserine modification. A compositionally biased stretch (polar residues) spans 1278 to 1291 (LQGSQTSLDGTIKQ).

It belongs to the immunoglobulin superfamily. L1/neurofascin/NgCAM family. In terms of assembly, horseshoe-shaped homodimer. Probable constituent of a NFASC/NRCAM/ankyrin-G complex. Associates with the sodium channel beta-1 (SCN1B) and beta-3 (SCN3B) subunits. Interacts with GLDN/gliomedin. Interacts with MYOC.

Its subcellular location is the cell membrane. The protein resides in the cell junction. The protein localises to the paranodal septate junction. Cell adhesion, ankyrin-binding protein which may be involved in neurite extension, axonal guidance, synaptogenesis, myelination and neuron-glial cell interactions. The polypeptide is Neurofascin (NFASC) (Homo sapiens (Human)).